Reading from the N-terminus, the 270-residue chain is Oxidoreductase claK (270 aa).

Belongs to the avfA family.

It participates in pigment biosynthesis. Oxidoreductase; part of the gene cluster that mediates the biosynthesis of the bianthraquinone cladofulvin, a conidial pigment not required for virulence but that plays a role in fitness and resistance to environmental stresses including UV light and low-temperature stress. The pathway begins with the synthesis of atrochrysone thioester by the polyketide synthase (PKS) claG. The atrochrysone carboxyl ACP thioesterase claF then breaks the thioester bond and releases the atrochrysone carboxylic acid from claG. This compound is decarboxylated by claH to yield emodin, which is further converted to chrysophanol hydroquinone by the reductase claC and the dehydratase claB. The cytochrome monooxygenase P450 claM then catalyzes the dimerization of nataloe-emodin to cladofulvin. The polypeptide is Oxidoreductase claK (Passalora fulva (Tomato leaf mold)).